The following is a 72-amino-acid chain: MAKDDVIQMQGEVIENLPNATFRVKLENGHVVLGHISGKMRMHYIRIFPGDKVTVELTPYDLSRARIVFRAK.

The S1-like domain occupies 1-72 (MAKDDVIQMQ…SRARIVFRAK (72 aa)).

Belongs to the IF-1 family. As to quaternary structure, component of the 30S ribosomal translation pre-initiation complex which assembles on the 30S ribosome in the order IF-2 and IF-3, IF-1 and N-formylmethionyl-tRNA(fMet); mRNA recruitment can occur at any time during PIC assembly.

It is found in the cytoplasm. In terms of biological role, one of the essential components for the initiation of protein synthesis. Stabilizes the binding of IF-2 and IF-3 on the 30S subunit to which N-formylmethionyl-tRNA(fMet) subsequently binds. Helps modulate mRNA selection, yielding the 30S pre-initiation complex (PIC). Upon addition of the 50S ribosomal subunit IF-1, IF-2 and IF-3 are released leaving the mature 70S translation initiation complex. In Burkholderia mallei (strain NCTC 10247), this protein is Translation initiation factor IF-1.